The chain runs to 123 residues: Fluoride-specific ion channel FluC (123 aa).

The next 4 helical transmembrane spans lie at 6 to 26, 38 to 58, 68 to 88, and 100 to 120; these read VALVLIGGGTGAVARYYLSGV, LLVNSLASFLLGYLYGLIFWG, FLGTGFCGGLSTFSTFSYETF, and LLNIFANVLATIFLVFLGFVL. Na(+) is bound by residues glycine 75 and serine 78.

This sequence belongs to the fluoride channel Fluc/FEX (TC 1.A.43) family.

It is found in the cell membrane. It catalyses the reaction fluoride(in) = fluoride(out). Na(+) is not transported, but it plays an essential structural role and its presence is essential for fluoride channel function. Its function is as follows. Fluoride-specific ion channel. Important for reducing fluoride concentration in the cell, thus reducing its toxicity. The chain is Fluoride-specific ion channel FluC from Pyrococcus furiosus (strain ATCC 43587 / DSM 3638 / JCM 8422 / Vc1).